Consider the following 296-residue polypeptide: Light-independent protochlorophyllide reductase iron-sulfur ATP-binding protein (296 aa).

ATP-binding positions include 39–44 (GIGKST) and Lys-68. Residue Ser-43 coordinates Mg(2+). Cys-124 and Cys-158 together coordinate [4Fe-4S] cluster. ATP is bound at residue 209–210 (NR).

It belongs to the NifH/BchL/ChlL family. In terms of assembly, homodimer. Protochlorophyllide reductase is composed of three subunits; ChlL, ChlN and ChlB. [4Fe-4S] cluster is required as a cofactor.

It catalyses the reaction chlorophyllide a + oxidized 2[4Fe-4S]-[ferredoxin] + 2 ADP + 2 phosphate = protochlorophyllide a + reduced 2[4Fe-4S]-[ferredoxin] + 2 ATP + 2 H2O. Its pathway is porphyrin-containing compound metabolism; chlorophyll biosynthesis (light-independent). Its function is as follows. Component of the dark-operative protochlorophyllide reductase (DPOR) that uses Mg-ATP and reduced ferredoxin to reduce ring D of protochlorophyllide (Pchlide) to form chlorophyllide a (Chlide). This reaction is light-independent. The L component serves as a unique electron donor to the NB-component of the complex, and binds Mg-ATP. This chain is Light-independent protochlorophyllide reductase iron-sulfur ATP-binding protein, found in Prochlorococcus marinus (strain MIT 9313).